The primary structure comprises 293 residues: 33 kDa chaperonin (293 aa).

2 disulfides stabilise this stretch: Cys-229-Cys-231 and Cys-262-Cys-265.

It belongs to the HSP33 family. In terms of processing, under oxidizing conditions two disulfide bonds are formed involving the reactive cysteines. Under reducing conditions zinc is bound to the reactive cysteines and the protein is inactive.

Its subcellular location is the cytoplasm. In terms of biological role, redox regulated molecular chaperone. Protects both thermally unfolding and oxidatively damaged proteins from irreversible aggregation. Plays an important role in the bacterial defense system toward oxidative stress. This is 33 kDa chaperonin from Methylobacillus flagellatus (strain ATCC 51484 / DSM 6875 / VKM B-1610 / KT).